The primary structure comprises 381 residues: Chitin deacetylase 8 (381 aa).

Positions 1 to 18 (MKRLSVLCSLLLVAAALG) are cleaved as a signal peptide. Intrachain disulfides connect Cys-27–Cys-39 and Cys-32–Cys-37. Residues Asp-63, His-117, and His-121 each contribute to the Zn(2+) site. Intrachain disulfides connect Cys-86–Cys-335, Cys-211–Cys-216, Cys-240–Cys-246, Cys-343–Cys-365, and Cys-348–Cys-368. The N-linked (GlcNAc...) asparagine glycan is linked to Asn-171.

The protein belongs to the carbohydrate esterase 4 (CE4) family. The cofactor is Zn(2+). In terms of tissue distribution, strongly expressed in the midgut. Has little or no expression in other tissues tested.

The protein resides in the secreted. It catalyses the reaction [(1-&gt;4)-N-acetyl-beta-D-glucosaminyl](n) + n H2O = chitosan + n acetate. Functionally, hydrolyzes the N-acetamido groups of N-acetyl-D-glucosamine (GlcNAc) residues in chitin. Shows activity towards the chitinous oligomers GlcNAc(3), GlcNAc(4), GlcNAc(5) and GlcNAc(6), but not GlcNAc or GlcNAc(2). Requires the substrate to occupy subsites 0, +1, and +2 for optimum catalysis. The sequence is that of Chitin deacetylase 8 from Bombyx mori (Silk moth).